The sequence spans 112 residues: UPF0482 protein Ent638_1930 (112 aa).

Residues 1–27 (MTTLRKRLCLATLLSLTALAFTAPVSA) form the signal peptide.

The protein belongs to the UPF0482 family.

The protein is UPF0482 protein Ent638_1930 of Enterobacter sp. (strain 638).